Here is a 314-residue protein sequence, read N- to C-terminus: E3 ubiquitin-protein ligase CHIP (314 aa).

Over residues 1 to 11 the composition is skewed to basic and acidic residues; that stretch reads MKGKEEREREG. Residues 1-47 form a disordered region; that stretch reads MKGKEEREREGGGGAVGPGAAGPGAGGGSPEKSHSAQEHKEQGNRLF. A compositionally biased stretch (gly residues) spans 12–29; that stretch reads GGGAVGPGAAGPGAGGGS. Residues 31-43 are compositionally biased toward basic and acidic residues; it reads EKSHSAQEHKEQG. TPR repeat units lie at residues 36 to 69, 70 to 103, and 105 to 137; these read AQEH…NPLV, AVYY…DGQS, and KAHF…AKEQ. The 75-residue stretch at 237 to 311 folds into the U-box domain; it reads DIPDYLCGKI…DAFISENGWV (75 aa).

In terms of assembly, homodimer.

The protein localises to the cytoplasm. The protein resides in the nucleus. It is found in the mitochondrion. It catalyses the reaction S-ubiquitinyl-[E2 ubiquitin-conjugating enzyme]-L-cysteine + [acceptor protein]-L-lysine = [E2 ubiquitin-conjugating enzyme]-L-cysteine + N(6)-ubiquitinyl-[acceptor protein]-L-lysine.. Functionally, E3 ubiquitin-protein ligase which targets misfolded chaperone substrates towards proteasomal degradation. Collaborates with ATXN3 in the degradation of misfolded chaperone substrates: ATXN3 restricting the length of ubiquitin chain attached to STUB1/CHIP substrates and preventing further chain extension. This is E3 ubiquitin-protein ligase CHIP from Gallus gallus (Chicken).